We begin with the raw amino-acid sequence, 864 residues long: MHERYVPADVEAAAQSDWRAADAYRSKEDANRKKFYCVSMLPYPSGKLHMGHVRNYTINDVMYRYLRMNGYNTLMPMGWDAFGMPAENAAMANGVPPAQWTYENIAYMKKQMQAMGLAIDWSREVTTCKPDYYKWNQWLFLKMLEKGVAYKKTGTVNWDPVDQTVLANEQVIDGRGWRSGAFVEKREIPMYYMRITQYADELLNDLDGLGWPERVKVMQHNWIGKSFGVNFGFPYELDGEKKLLRVFTTRADTIMGVTFCAIAAEHPLAARLARDKPALQAFIDECKRGGVAEADIATMEKKGVATGFSVSHPLTGEPVEVWIGNYVLMSYGEGAVMGVPAHDERDFAFAKKYGLPIRQVIAVEGETYSTDAWQEWYGDKTRAVCVNSGKYDGLAYDAAVDAIAAELKAGGLGDKQITYRLRDWGISRQRYWGTPIPIIHCPSCGDVPVPEQDLPVVLPEDLVPDGTGNPLAKSDAFLNCTCPKCGAVAKRETDTMDTFVDSAWYFSRYAAPDAQTMVDARTDYWMPMDQYIGGIEHAILHLLYSRFWAKVMRDLGLVAFGEPAKNLLTQGMVLNETFYREDAAGKKTWYNPADVTVSFDDKGRPVGAVLKSDGQPVELGGIEKMSKSKNNGVDPQMLIDHYGADTARLFTMFAAPPEQQLEWSGAGVDGASRFLRRVWAFGFANREALAVRAPFDAAQLAEAGKTLRREIHGVLKQADFDYQRLQYNTVVSAAMKMLNAIEGAKGATPAVLRETYGVLLRVLYPVVPHVTFELWKVLGYADEFGPLLDAPWPKVDEAALEQAEIELVLQVNGKVRGALKVAKDASREAIEAAAVADGMFAKFAEGRPAKKIIVVPGRLVNVVV.

The 'HIGH' region signature appears at 42 to 52 (PYPSGKLHMGH). The 'KMSKS' region motif lies at 624-628 (KMSKS). Residue K627 participates in ATP binding.

Belongs to the class-I aminoacyl-tRNA synthetase family.

The protein localises to the cytoplasm. It carries out the reaction tRNA(Leu) + L-leucine + ATP = L-leucyl-tRNA(Leu) + AMP + diphosphate. The chain is Leucine--tRNA ligase from Burkholderia mallei (strain ATCC 23344).